We begin with the raw amino-acid sequence, 552 residues long: MMESAVTAHTLRIAMAQFDFPVGAVTQNTDRIIEYIAAARDEFEADIVLFPELAISGYPPEDLLLRPGFLAHCEQALARIAAATRGIVAVVGWPQSAGSVVYNAASVLREGRIEATYRKRELPNYAVFDERRYFDVDPDGDNCVVTVKGVQVGVVICEDLWFAEPLAKTVQAGAELVLVPNASPYERGKHAQRDALLAERTRESGAAIAYLNVVGGQDALVFDGASVVADGDGTVHPAAAAFVDQWLVVDYAAGERSFTPVVWVDDGDESMDALAWRAVVRGLKDYCGKNGFRKVWLGLSGGIDSALVLAMAVDALGGENVTAVRLPSRYTAGLSNDLADEQCRALGVKLETIAIEPAFEGLLAALGPLFADTQPDITEENLQSRSRGVILMALSNKFGGLVLTTGNKSEYAVGYATIYGDMCGGYAPLKDLYKTEVFGLAKWRNTVGGAPVIPPAVISRPPSAELRDNQTDQDSLPPYDVLDGILYRYVDQEQSRDDIVAAGYAADTVEHVLRLVRLNEWKRHQAAPGPKVSRRAFGRERRYPITNGYSGQ.

Positions 11-253 constitute a CN hydrolase domain; sequence LRIAMAQFDF…DQWLVVDYAA (243 aa). E52 acts as the Proton acceptor; for glutaminase activity in catalysis. K119 serves as the catalytic For glutaminase activity. Y125 lines the L-glutamine pocket. C157 acts as the Nucleophile; for glutaminase activity in catalysis. The L-glutamine site is built by S183 and K189. The segment at 275–552 is ligase; the sequence is AWRAVVRGLK…YPITNGYSGQ (278 aa). Position 298 to 305 (298 to 305) interacts with ATP; that stretch reads GLSGGIDS. Residue N381 participates in deamido-NAD(+) binding. An ATP-binding site is contributed by T405. E410 and K522 together coordinate deamido-NAD(+).

It in the C-terminal section; belongs to the NAD synthetase family.

The enzyme catalyses deamido-NAD(+) + L-glutamine + ATP + H2O = L-glutamate + AMP + diphosphate + NAD(+) + H(+). The protein operates within cofactor biosynthesis; NAD(+) biosynthesis; NAD(+) from deamido-NAD(+) (L-Gln route): step 1/1. Catalyzes the ATP-dependent amidation of deamido-NAD to form NAD. Uses L-glutamine as a nitrogen source. In Xanthomonas campestris pv. campestris (strain 8004), this protein is Glutamine-dependent NAD(+) synthetase.